The primary structure comprises 423 residues: ATP-dependent Clp protease ATP-binding subunit ClpX (423 aa).

A ClpX-type ZB domain is found at 1 to 50; sequence MTDDTEYRCSFCGKEHHQVDDLIAGPDVRICSECVVLSCEIVEDRRNEAL. C9, C12, C31, and C34 together coordinate Zn(2+). 126–133 contacts ATP; sequence PTGCGKTY.

It belongs to the ClpX chaperone family. In terms of assembly, component of the ClpX-ClpP complex. Forms a hexameric ring that, in the presence of ATP, binds to fourteen ClpP subunits assembled into a disk-like structure with a central cavity, resembling the structure of eukaryotic proteasomes.

Its function is as follows. ATP-dependent specificity component of the Clp protease. It directs the protease to specific substrates. Can perform chaperone functions in the absence of ClpP. The chain is ATP-dependent Clp protease ATP-binding subunit ClpX from Tropheryma whipplei (strain TW08/27) (Whipple's bacillus).